The sequence spans 98 residues: Putative pterin-4-alpha-carbinolamine dehydratase (98 aa).

The protein belongs to the pterin-4-alpha-carbinolamine dehydratase family.

The enzyme catalyses (4aS,6R)-4a-hydroxy-L-erythro-5,6,7,8-tetrahydrobiopterin = (6R)-L-erythro-6,7-dihydrobiopterin + H2O. In Chelativorans sp. (strain BNC1), this protein is Putative pterin-4-alpha-carbinolamine dehydratase.